Here is a 126-residue protein sequence, read N- to C-terminus: Holo-[acyl-carrier-protein] synthase (126 aa).

D9 and E58 together coordinate Mg(2+).

It belongs to the P-Pant transferase superfamily. AcpS family. It depends on Mg(2+) as a cofactor.

The protein resides in the cytoplasm. It carries out the reaction apo-[ACP] + CoA = holo-[ACP] + adenosine 3',5'-bisphosphate + H(+). In terms of biological role, transfers the 4'-phosphopantetheine moiety from coenzyme A to a Ser of acyl-carrier-protein. This Edwardsiella ictaluri (strain 93-146) protein is Holo-[acyl-carrier-protein] synthase.